The primary structure comprises 301 residues: tRNA (guanine-N(7)-)-methyltransferase (301 aa).

A disordered region spans residues 1 to 26; it reads MSETPDSPRPVTPGSQASFGTYGGRP. 4 residues coordinate S-adenosyl-L-methionine: Glu85, Glu110, Asn137, and Asp160. Asp160 is a catalytic residue. Residues Lys164 and Asp196 each coordinate substrate. The segment at 244–270 is disordered; the sequence is APVREGRAPVSTEHTGPNEGVDEEGGW. 280–283 is a binding site for substrate; sequence TSFE.

Belongs to the class I-like SAM-binding methyltransferase superfamily. TrmB family.

The catalysed reaction is guanosine(46) in tRNA + S-adenosyl-L-methionine = N(7)-methylguanosine(46) in tRNA + S-adenosyl-L-homocysteine. It functions in the pathway tRNA modification; N(7)-methylguanine-tRNA biosynthesis. Its function is as follows. Catalyzes the formation of N(7)-methylguanine at position 46 (m7G46) in tRNA. In Paenarthrobacter aurescens (strain TC1), this protein is tRNA (guanine-N(7)-)-methyltransferase.